A 379-amino-acid chain; its full sequence is Cobalt-precorrin-5B C(1)-methyltransferase (379 aa).

It belongs to the CbiD family.

It carries out the reaction Co-precorrin-5B + S-adenosyl-L-methionine = Co-precorrin-6A + S-adenosyl-L-homocysteine. Its pathway is cofactor biosynthesis; adenosylcobalamin biosynthesis; cob(II)yrinate a,c-diamide from sirohydrochlorin (anaerobic route): step 6/10. Its function is as follows. Catalyzes the methylation of C-1 in cobalt-precorrin-5B to form cobalt-precorrin-6A. In Salmonella dublin (strain CT_02021853), this protein is Cobalt-precorrin-5B C(1)-methyltransferase.